Consider the following 424-residue polypeptide: 26S proteasome regulatory subunit 6A homolog A (424 aa).

Residues 1-21 (MATPMVEDTSSFEEDQLASMS) form a disordered region. Ala2 bears the N-acetylalanine mark. The residue at position 19 (Ser19) is a Phosphoserine. 212 to 219 (GPPGTGKT) provides a ligand contact to ATP. Lys235 is covalently cross-linked (Glycyl lysine isopeptide (Lys-Gly) (interchain with G-Cter in ubiquitin)). Position 278 is an O-acetylthreonine (Thr278). Glycyl lysine isopeptide (Lys-Gly) (interchain with G-Cter in ubiquitin) cross-links involve residues Lys279 and Lys416.

It belongs to the AAA ATPase family. As to quaternary structure, component of the 19S regulatory particle (RP/PA700) base subcomplex of the 26S proteasome. The 26S proteasome is composed of a core protease (CP), known as the 20S proteasome, capped at one or both ends by the 19S regulatory particle (RP/PA700). The RP/PA700 complex is composed of at least 17 different subunits in two subcomplexes, the base and the lid, which form the portions proximal and distal to the 20S proteolytic core, respectively. Ubiquitous.

It is found in the cytoplasm. It localises to the nucleus. Functionally, the 26S proteasome is involved in the ATP-dependent degradation of ubiquitinated proteins. The regulatory (or ATPase) complex confers ATP dependency and substrate specificity to the 26S complex. Interacts with transit peptides of proteins targeted to the chloroplast, and may be involved in the degradation of unimported plastid protein precursors. Plays a essential role in the gametophyte development. Involved in tolerance to zinc deficiency, possibly through alleviation of oxidative stresses or processing of poly-ubiquitinated proteins. This is 26S proteasome regulatory subunit 6A homolog A from Arabidopsis thaliana (Mouse-ear cress).